We begin with the raw amino-acid sequence, 358 residues long: Chorismate synthase (358 aa).

Residue Arg47 coordinates NADP(+). FMN-binding positions include 124–126 (RSS), 240–241 (NA), Gly284, 299–303 (KPIAT), and Arg325.

Belongs to the chorismate synthase family. Homotetramer. FMNH2 is required as a cofactor.

The enzyme catalyses 5-O-(1-carboxyvinyl)-3-phosphoshikimate = chorismate + phosphate. It functions in the pathway metabolic intermediate biosynthesis; chorismate biosynthesis; chorismate from D-erythrose 4-phosphate and phosphoenolpyruvate: step 7/7. In terms of biological role, catalyzes the anti-1,4-elimination of the C-3 phosphate and the C-6 proR hydrogen from 5-enolpyruvylshikimate-3-phosphate (EPSP) to yield chorismate, which is the branch point compound that serves as the starting substrate for the three terminal pathways of aromatic amino acid biosynthesis. This reaction introduces a second double bond into the aromatic ring system. This is Chorismate synthase from Bacteroides thetaiotaomicron (strain ATCC 29148 / DSM 2079 / JCM 5827 / CCUG 10774 / NCTC 10582 / VPI-5482 / E50).